Reading from the N-terminus, the 101-residue chain is Large ribosomal subunit protein uL23c (101 aa).

It belongs to the universal ribosomal protein uL23 family. As to quaternary structure, part of the 50S ribosomal subunit.

The protein resides in the plastid. It localises to the chloroplast. In terms of biological role, binds to 23S rRNA. The chain is Large ribosomal subunit protein uL23c (rpl23) from Cyanidium caldarium (Red alga).